The following is a 196-amino-acid chain: Recombination protein RecR (196 aa).

A C4-type zinc finger spans residues 55–70; sequence CELCGNLESESPCSIC. Residues 78–173 enclose the Toprim domain; sequence DIVCVVEEIT…KLSFLAHGIP (96 aa).

This sequence belongs to the RecR family.

Functionally, may play a role in DNA repair. It seems to be involved in an RecBC-independent recombinational process of DNA repair. It may act with RecF and RecO. This is Recombination protein RecR from Neorickettsia sennetsu (strain ATCC VR-367 / Miyayama) (Ehrlichia sennetsu).